We begin with the raw amino-acid sequence, 993 residues long: Ephrin type-B receptor 3 (993 aa).

A signal peptide spans 1-29 (MAGARPPPGLLPLLAPLLLPLLLPAGCWA). Topologically, residues 30 to 554 (LEETLMDTKW…AQQLQEQLPL (525 aa)) are extracellular. An Eph LBD domain is found at 31–209 (EETLMDTKWV…FYKKCASTTA (179 aa)). An intrachain disulfide couples cysteine 73 to cysteine 191. Fibronectin type-III domains are found at residues 331 to 446 (VPSP…TNQA) and 447 to 540 (APSE…TTSE). Residues asparagine 343 and asparagine 440 are each glycosylated (N-linked (GlcNAc...) asparagine). The helical transmembrane segment at 555–575 (IVGSTVAGFVFMVVVVVIALV) threads the bilayer. Over 576-993 (CLRKQRHGPD…QMNQTLPVQV (418 aa)) the chain is Cytoplasmic. Tyrosine 609 is subject to Phosphotyrosine; by autocatalysis. The region spanning 628-891 (VKIEEVIGAG…QIVNTLDKLI (264 aa)) is the Protein kinase domain. Residues 634 to 642 (IGAGEFGEV) and lysine 660 contribute to the ATP site. Residue aspartate 753 is the Proton acceptor of the active site. An SAM domain is found at 920–984 (TTFTTVGDWL…LCSIQDMRLQ (65 aa)). The PDZ-binding motif lies at 991-993 (VQV).

This sequence belongs to the protein kinase superfamily. Tyr protein kinase family. Ephrin receptor subfamily. In terms of assembly, heterotetramer upon binding of the ligand. The heterotetramer is composed of an ephrin dimer and a receptor dimer. Oligomerization is probably required to induce biological responses. Post-translationally, phosphorylated. Autophosphorylates upon ligand-binding. Autophosphorylation on Tyr-609 is required for interaction with SH2 domain-containing proteins. Ubiquitinated by RNF186, mainly through 'Lys-48' and 'Lys-63'-linked polyubiquitin chains. As to expression, expressed in cells of the retinal ganglion cell layer during retinal axon guidance to the optic disk. Expressed by Paneth and progenitor cells in the crypts of the intestinal epithelium (at protein level). Expressed in myogenic progenitor cells.

Its subcellular location is the cell membrane. The protein resides in the cell projection. It localises to the dendrite. It carries out the reaction L-tyrosyl-[protein] + ATP = O-phospho-L-tyrosyl-[protein] + ADP + H(+). Receptor tyrosine kinase which binds promiscuously transmembrane ephrin-B family ligands residing on adjacent cells, leading to contact-dependent bidirectional signaling into neighboring cells. The signaling pathway downstream of the receptor is referred to as forward signaling while the signaling pathway downstream of the ephrin ligand is referred to as reverse signaling. Generally has an overlapping and redundant function with EPHB2. Like EPHB2, functions in axon guidance during development regulating for instance the neurons forming the corpus callosum and the anterior commissure, 2 major interhemispheric connections between the temporal lobes of the cerebral cortex. In addition to its role in axon guidance also plays an important redundant role with other ephrin-B receptors in development and maturation of dendritic spines and the formation of excitatory synapses. Controls other aspects of development through regulation of cell migration and positioning. This includes angiogenesis, palate development and thymic epithelium development for instance. Forward and reverse signaling through the EFNB2/EPHB3 complex also regulate migration and adhesion of cells that tubularize the urethra and septate the cloaca. Finally, plays an important role in intestinal epithelium differentiation segregating progenitor from differentiated cells in the crypt. The polypeptide is Ephrin type-B receptor 3 (Ephb3) (Mus musculus (Mouse)).